We begin with the raw amino-acid sequence, 475 residues long: Pregnancy-specific glycoprotein 22 (475 aa).

An N-terminal signal peptide occupies residues 1–35; it reads MEVSSELLSNGWTSWQRVLLTASLLTCWLLPITAG. Ig-like V-type domains are found at residues 44–140, 162–260, and 280–380; these read KLVE…FLQV, PASV…YLQV, and PVPP…QVNV. 3 N-linked (GlcNAc...) asparagine glycosylation sites follow: Asn103, Asn110, and Asn231. The 85-residue stretch at 387 to 471 folds into the Ig-like C2-type domain; sequence PVMRVTDSTV…SKTSLPVRLT (85 aa). Cys406 and Cys454 form a disulfide bridge.

The protein belongs to the immunoglobulin superfamily. CEA family.

The protein localises to the secreted. Functionally, may have an angiogenic function during early placental development. Binds to cell-surface heparan sulfate proteoglycans (HSPGs), and stimulates secretion of the proangiogenic factors VEGFA and TGFB from uterine dendritic cells and natural killer cells. Also induces endothelial tube formation in vitro. This Mus musculus (Mouse) protein is Pregnancy-specific glycoprotein 22.